The primary structure comprises 344 residues: MGLGRELRRIGLEPVFSSFGEGREMLMREFPDAPVYGLPKIELFSEDGSFDLLLLLRRHPDLPLRFYAGVEADRRVIRRHGCKVVVSDCQFHALVAAQIIGVPAIVISNMLRVPGEGSLVRLINGMLRRMFELADIVLIPDTYDDTYDVPEIDTEVVWVGPILKRRPDELPPRDAVRRKYGIPDDATVVLVTAGGSKYGRRIVRIAVEGLKLLSKSIDVFPVIISEERVGDGLGLQLRYVDNLLELIKVSNVVITHGGHTTLSECACLRTPVVSVPLPNHPEQHMNAERVLQRGLGVAVPPEELSPKRIAEAIEQAIDWKVPKIRMMDGRGAERAARIVAGTLD.

It belongs to the glycosyltransferase 28 family.

This is an uncharacterized protein from Methanopyrus kandleri (strain AV19 / DSM 6324 / JCM 9639 / NBRC 100938).